We begin with the raw amino-acid sequence, 475 residues long: Ribulose bisphosphate carboxylase large chain (475 aa).

The propeptide occupies 1–2 (MS). Residue P3 is modified to N-acetylproline. K14 carries the N6,N6,N6-trimethyllysine modification. The substrate site is built by N123 and T173. Catalysis depends on K175, which acts as the Proton acceptor. K177 serves as a coordination point for substrate. Residues K201, D203, and E204 each coordinate Mg(2+). An N6-carboxylysine modification is found at K201. The active-site Proton acceptor is H294. Substrate contacts are provided by R295, H327, and S379.

This sequence belongs to the RuBisCO large chain family. Type I subfamily. As to quaternary structure, heterohexadecamer of 8 large chains and 8 small chains; disulfide-linked. The disulfide link is formed within the large subunit homodimers. It depends on Mg(2+) as a cofactor. In terms of processing, the disulfide bond which can form in the large chain dimeric partners within the hexadecamer appears to be associated with oxidative stress and protein turnover.

Its subcellular location is the plastid. It is found in the chloroplast. It catalyses the reaction 2 (2R)-3-phosphoglycerate + 2 H(+) = D-ribulose 1,5-bisphosphate + CO2 + H2O. The enzyme catalyses D-ribulose 1,5-bisphosphate + O2 = 2-phosphoglycolate + (2R)-3-phosphoglycerate + 2 H(+). In terms of biological role, ruBisCO catalyzes two reactions: the carboxylation of D-ribulose 1,5-bisphosphate, the primary event in carbon dioxide fixation, as well as the oxidative fragmentation of the pentose substrate in the photorespiration process. Both reactions occur simultaneously and in competition at the same active site. The polypeptide is Ribulose bisphosphate carboxylase large chain (Pinus edulis (Pinyon pine)).